The following is a 231-amino-acid chain: Lipoprotein-releasing system ATP-binding protein LolD (231 aa).

In terms of domain architecture, ABC transporter spans 6 to 231 (LQVQAVSKSY…YLQAVAEHAQ (226 aa)). 42 to 49 (GTSGSGKS) is an ATP binding site.

Belongs to the ABC transporter superfamily. Lipoprotein translocase (TC 3.A.1.125) family. The complex is composed of two ATP-binding proteins (LolD) and two transmembrane proteins (LolC and LolE).

The protein resides in the cell inner membrane. In terms of biological role, part of the ABC transporter complex LolCDE involved in the translocation of mature outer membrane-directed lipoproteins, from the inner membrane to the periplasmic chaperone, LolA. Responsible for the formation of the LolA-lipoprotein complex in an ATP-dependent manner. The chain is Lipoprotein-releasing system ATP-binding protein LolD from Shewanella sp. (strain MR-7).